A 158-amino-acid polypeptide reads, in one-letter code: NKG2-F type II integral membrane protein (158 aa).

Polar residues predominate over residues 1 to 12; that stretch reads MNKQRGTYSEVS. Residues 1–25 are disordered; the sequence is MNKQRGTYSEVSLAQDPKRQQRKLK. Residues 1–74 lie on the Cytoplasmic side of the membrane; sequence MNKQRGTYSE…LPPPEKLTAE (74 aa). Residues 75 to 95 traverse the membrane as a helical; Signal-anchor for type II membrane protein segment; the sequence is VLGIICIVLMATVLKTIVLIP. Residues 96–158 are Extracellular-facing; sequence CIGVLEQNNF…VLRRTLICFL (63 aa).

In terms of assembly, can form disulfide-bonded heterodimer with CD94. In terms of tissue distribution, natural killer cells.

Its subcellular location is the membrane. May play a role as a receptor for the recognition of MHC class I HLA-E molecules by NK cells. The protein is NKG2-F type II integral membrane protein (KLRC4) of Homo sapiens (Human).